A 799-amino-acid chain; its full sequence is Phenylalanine--tRNA ligase beta subunit (799 aa).

Residues 40–147 (KSHLSSVITV…KDTTLGISVR (108 aa)) enclose the tRNA-binding domain. In terms of domain architecture, B5 spans 402 to 479 (SKTVTIETNL…RTIGYASIRT (78 aa)). Residues D457, D463, E466, and E467 each contribute to the Mg(2+) site. Positions 707–799 (SHFPQGQLDL…TAKSNGYSLR (93 aa)) constitute an FDX-ACB domain.

Belongs to the phenylalanyl-tRNA synthetase beta subunit family. Type 1 subfamily. As to quaternary structure, tetramer of two alpha and two beta subunits. Requires Mg(2+) as cofactor.

Its subcellular location is the cytoplasm. It carries out the reaction tRNA(Phe) + L-phenylalanine + ATP = L-phenylalanyl-tRNA(Phe) + AMP + diphosphate + H(+). This is Phenylalanine--tRNA ligase beta subunit from Leptospira biflexa serovar Patoc (strain Patoc 1 / Ames).